A 269-amino-acid polypeptide reads, in one-letter code: Regulatory protein RecX (269 aa).

It belongs to the RecX family.

The protein localises to the cytoplasm. Functionally, modulates RecA activity. The protein is Regulatory protein RecX of Listeria monocytogenes serotype 4b (strain F2365).